Reading from the N-terminus, the 267-residue chain is MRRIAVMGAAGRMGKTLIEAVQQTQGAGLTAAIDRPDSSLVGADAGELAALGRIGVLLSDDLAKVADDFDVLIDFTHPSVTLKNLAFCRKHGKAMIIGTTGFTSEEKQLLAEAGKDIPIVFAANFSVGVNLSLKLLDMAARVLGDDVDIEIIEAHHRHKVDAPSGTALRMGEVVANALGRDLQEVAVYGREGQTGARDRQTIGFATVRAGDVVGDHTVLFAAEGERLEITHKASSRMTFAKGAVRAALWLDGREAGLYDMQDVLELR.

Residues 8 to 13 (GAAGRM) and aspartate 34 contribute to the NAD(+) site. Arginine 35 serves as a coordination point for NADP(+). Residues 98–100 (GTT) and 122–125 (AANF) contribute to the NAD(+) site. The Proton donor/acceptor role is filled by histidine 155. Histidine 156 contributes to the (S)-2,3,4,5-tetrahydrodipicolinate binding site. The Proton donor role is filled by lysine 159. 165–166 (GT) lines the (S)-2,3,4,5-tetrahydrodipicolinate pocket.

It belongs to the DapB family.

It localises to the cytoplasm. It catalyses the reaction (S)-2,3,4,5-tetrahydrodipicolinate + NAD(+) + H2O = (2S,4S)-4-hydroxy-2,3,4,5-tetrahydrodipicolinate + NADH + H(+). It carries out the reaction (S)-2,3,4,5-tetrahydrodipicolinate + NADP(+) + H2O = (2S,4S)-4-hydroxy-2,3,4,5-tetrahydrodipicolinate + NADPH + H(+). It functions in the pathway amino-acid biosynthesis; L-lysine biosynthesis via DAP pathway; (S)-tetrahydrodipicolinate from L-aspartate: step 4/4. Functionally, catalyzes the conversion of 4-hydroxy-tetrahydrodipicolinate (HTPA) to tetrahydrodipicolinate. This Pseudomonas putida (strain W619) protein is 4-hydroxy-tetrahydrodipicolinate reductase.